Consider the following 327-residue polypeptide: Mitochondrial coenzyme A transporter SLC25A42 (327 aa).

Solcar repeat units lie at residues 34–120 (KSIL…YKKL), 132–217 (LTPI…LKKL), and 227–315 (PYPF…TQIL). 6 consecutive transmembrane segments (helical) span residues 36–56 (ILNS…AVAP), 92–112 (LWRG…IQFC), 138–158 (LLAG…LDLV), 189–209 (LYRG…ISFF), 233–253 (LLFG…LDVV), and 296–316 (VKGP…QILL).

The protein belongs to the mitochondrial carrier (TC 2.A.29) family.

The protein localises to the mitochondrion inner membrane. The catalysed reaction is ADP(out) + CoA(in) = ADP(in) + CoA(out). The enzyme catalyses 3'-dephospho-CoA(in) + ADP(out) = 3'-dephospho-CoA(out) + ADP(in). It carries out the reaction adenosine 3',5'-bisphosphate(in) + ADP(out) = adenosine 3',5'-bisphosphate(out) + ADP(in). It catalyses the reaction AMP(in) + ADP(out) = AMP(out) + ADP(in). The catalysed reaction is dADP(in) + ADP(out) = dADP(out) + ADP(in). The enzyme catalyses ADP(in) + ATP(out) = ADP(out) + ATP(in). Functionally, mitochondrial carrier mediating the transport of coenzyme A (CoA) in mitochondria in exchange for intramitochondrial (deoxy)adenine nucleotides and adenosine 3',5'-diphosphate. The polypeptide is Mitochondrial coenzyme A transporter SLC25A42 (slc25a42) (Xenopus tropicalis (Western clawed frog)).